Consider the following 268-residue polypeptide: Norsolorinic acid ketoreductase nor1 (268 aa).

Positions 32, 79, 108, 182, 186, 213, and 215 each coordinate NADP(+). The Proton donor role is filled by Tyr-182. The active-site Lowers pKa of active site Tyr is Lys-186.

Belongs to the short-chain dehydrogenases/reductases (SDR) family.

It is found in the cytoplasm. The protein localises to the cytosol. It localises to the vacuole. It catalyses the reaction (1'S)-averantin + NADP(+) = norsolorinic acid + NADPH + H(+). Its pathway is mycotoxin biosynthesis. Norsolorinic acid ketoreductase; part of the fragmented gene cluster that mediates the biosynthesis of dothistromin (DOTH), a polyketide toxin very similar in structure to the aflatoxin precursor, versicolorin B. The first step of the pathway is the conversion of acetate to norsolorinic acid (NOR) and requires the fatty acid synthase subunits hexA and hexB, as well as the polyketide synthase pksA. PksA combines a hexanoyl starter unit and 7 malonyl-CoA extender units to synthesize the precursor NOR. The hexanoyl starter unit is provided to the acyl-carrier protein (ACP) domain by the fungal fatty acid synthase hexA/hexB. The second step is the conversion of NOR to averantin (AVN) and requires the norsolorinic acid ketoreductase nor1, which catalyzes the dehydration of norsolorinic acid to form (1'S)-averantin. The cytochrome P450 monooxygenase avnA then catalyzes the hydroxylation of AVN to 5'hydroxyaverantin (HAVN). The next step is performed by adhA that transforms HAVN to averufin (AVF). Averufin might then be converted to hydroxyversicolorone by cypX and avfA. Hydroxyversicolorone is further converted versiconal hemiacetal acetate (VHA) by moxY. VHA is then the substrate for the versiconal hemiacetal acetate esterase est1 to yield versiconal (VAL). Versicolorin B synthase vbsA then converts VAL to versicolorin B (VERB) by closing the bisfuran ring. Then, the activity of the versicolorin B desaturase verB leads to versicolorin A (VERA). DotB, a predicted chloroperoxidase, may perform epoxidation of the A-ring of VERA. Alternatively, a cytochrome P450, such as cypX or avnA could catalyze this step. It is also possible that another, uncharacterized, cytochrome P450 enzyme is responsible for this step. Opening of the epoxide could potentially be achieved by the epoxide hydrolase epoA. However, epoA seems not to be required for DOTH biosynthesis, but other epoxide hydrolases may have the ability to complement this hydrolysis. Alternatively, opening of the epoxide ring could be achieved non-enzymatically. The next step is the deoxygenation of ring A to yield the 5,8-dihydroxyanthraquinone which is most likely catalyzed by the NADPH dehydrogenase encoded by ver1. The last stages of DOTH biosynthesis are proposed to involve hydroxylation of the bisfuran. OrdB and norB might have oxidative roles here. An alternative possibility is that cytochrome P450 monoogenases such as avnA and cypX might perform these steps in addition to previously proposed steps. In Dothistroma septosporum (strain NZE10 / CBS 128990) (Red band needle blight fungus), this protein is Norsolorinic acid ketoreductase nor1.